The following is a 375-amino-acid chain: Ubl carboxyl-terminal hydrolase 18 (375 aa).

The tract at residues 18-45 is disordered; it reads ESPQSPADLEEKKEEDSNMKREQPRERP. Positions 26–45 are enriched in basic and acidic residues; that stretch reads LEEKKEEDSNMKREQPRERP. Positions 55-373 constitute a USP domain; sequence VGLHNIGQTC…TAYLLVYMKM (319 aa). The Nucleophile role is filled by Cys64. The Proton acceptor role is filled by His321.

This sequence belongs to the peptidase C19 family. As to quaternary structure, interacts with STAT2; the interaction is direct. Interacts with IFNAR2; indirectly via STAT2, it negatively regulates the assembly of the ternary interferon-IFNAR1-IFNAR2 complex and inhibits type I interferon signaling. Interacts with STING1. Interacts with USP20.

It carries out the reaction Thiol-dependent hydrolysis of ester, thioester, amide, peptide and isopeptide bonds formed by the C-terminal Gly of ubiquitin (a 76-residue protein attached to proteins as an intracellular targeting signal).. Interferon-induced ISG15-specific protease that plays a crucial role for maintaining a proper balance of ISG15-conjugated proteins in cells. Regulates protein ISGylation by efficiently cleaving ISG15 conjugates linked via isopeptide bonds. Regulates T-cell activation and T-helper 17 (Th17) cell differentiation by deubiquitinating TAK1, likely to keep TAK1-TAB complexes in steady conditions. In turn, restricts activation of NF-kappa-B, NFAT, and JNK as well as expression of IL2 in T-cells after TCR activation. Acts as a molecular adapter with USP20 to promote innate antiviral response through deubiquitinating STING1. Involved also in the negative regulation of the inflammatory response triggered by type I interferon. Upon recruitment by STAT2 to the type I interferon receptor subunit IFNAR2 interferes with the assembly of the ternary interferon-IFNAR1-IFNAR2 complex and acts as a negative regulator of the type I interferon signaling pathway. The polypeptide is Ubl carboxyl-terminal hydrolase 18 (USP18) (Pongo abelii (Sumatran orangutan)).